The chain runs to 233 residues: tRNA (guanine-N(7)-)-methyltransferase (233 aa).

Residues Glu-65, Glu-90, Asp-117, and Asp-139 each coordinate S-adenosyl-L-methionine. The active site involves Asp-139. Substrate contacts are provided by residues Lys-143, Asp-175, and 212–215 (TRYE).

This sequence belongs to the class I-like SAM-binding methyltransferase superfamily. TrmB family.

It catalyses the reaction guanosine(46) in tRNA + S-adenosyl-L-methionine = N(7)-methylguanosine(46) in tRNA + S-adenosyl-L-homocysteine. Its pathway is tRNA modification; N(7)-methylguanine-tRNA biosynthesis. Catalyzes the formation of N(7)-methylguanine at position 46 (m7G46) in tRNA. In Roseobacter denitrificans (strain ATCC 33942 / OCh 114) (Erythrobacter sp. (strain OCh 114)), this protein is tRNA (guanine-N(7)-)-methyltransferase.